A 200-amino-acid chain; its full sequence is MAAAGNKSINAKLVLLGDVGAGKSSLVLRFVKDQFVEFQESTIGAAFFSQTLAVNDATVKFEIWDTAGQERYHSLAPMYYRGAAAAIIVFDVTNQASFERAKKWVQELQAQGNPNMVMALAGNKSDLLDARKVTAEDAQTYAQENGLFFMETSAKTATNVKEIFYEIARRLPRVQPTENPTGMVLPDRAMDRAVSSSCCA.

Residue 17–25 participates in GTP binding; that stretch reads GDVGAGKSS. Residues 39–47 carry the Effector region motif; the sequence is QESTIGAAF. Residues 65 to 69, 123 to 126, and 153 to 154 each bind GTP; these read DTAGQ, NKSD, and SA. Residues C198 and C199 are each lipidated (S-geranylgeranyl cysteine).

The protein belongs to the small GTPase superfamily. Rab family. As to quaternary structure, interacts with VPS9A homodimer. Interacts with TCTP1. Interacts with MON1. Interacts with EREX (via PX domain). Binds to VPS3. As to expression, expressed in roots and actively dividing cells.

Its subcellular location is the early endosome membrane. It is found in the endosome membrane. The protein resides in the prevacuolar compartment membrane. The protein localises to the endosome. It localises to the multivesicular body membrane. Its subcellular location is the cell membrane. It is found in the cytoplasm. With respect to regulation, regulated by guanine nucleotide exchange factors (GEFs) which promote the exchange of bound GDP for free GTP. Its function is as follows. Endosomal protein that may be involved in endocytosis. Involved in the trafficking of proteins from prevacuolar compartments (PVCs) to vacuoles. May activate the MON1-CCZ1 complex which acts as guanine nucleotide exchange factors (GEF) for Rab7 protein family, and serves as a link between Rab5 and Rab7 families in PVCs, and mediates PVC maturation. Involved in vacuolar transport of storage proteins with EREX as effector. Regulates membrane trafficking to protein storage vacuoles (PSVs). The chain is Ras-related protein RABF2b from Arabidopsis thaliana (Mouse-ear cress).